We begin with the raw amino-acid sequence, 340 residues long: Nicotianamine synthase 9 (340 aa).

The protein belongs to the nicotianamine synthase (NAS)-like family. In terms of assembly, homotrimer.

The catalysed reaction is 3 S-adenosyl-L-methionine = nicotianamine + 3 S-methyl-5'-thioadenosine + 3 H(+). Functionally, synthesizes nicotianamine, a polyamine that is the first intermediate in the synthesis of the phytosiderophores of the mugineic acid type found in gramineae which serves as a sensor for the physiological iron status within the plant, and/or might be involved in the transport of iron. This is Nicotianamine synthase 9 (NAS9) from Hordeum vulgare (Barley).